Reading from the N-terminus, the 187-residue chain is Proenkephalin-A (187 aa).

Propeptides lie at residues 52–70, 80–143, 153–163, and 173–187; these read MDELYPQEPEEEAPAEILA, DAEE…KMLQ, VGRPEWWMDYQ, and FADSLPSDEEGESYS. A disordered region spans residues 81 to 132; that stretch reads AEEEEDALASSSDLLKELLGPGETETAAAPRGRDDEDVSKSHGGFMRALKGS. Low complexity predominate over residues 88-99; sequence LASSSDLLKELL. Residues 111 to 120 show a composition bias toward basic and acidic residues; that stretch reads RGRDDEDVSK. Ser187 is modified (phosphoserine).

It belongs to the opioid neuropeptide precursor family. Processed and degraded by ACE. Post-translationally, the N-terminal domain contains 6 conserved cysteines thought to be involved in disulfide bonding and/or processing. In terms of processing, proenkephalin-A is cleaved by CTSL to generate Met-enkephalin.

The protein resides in the cytoplasmic vesicle. The protein localises to the secretory vesicle. Its subcellular location is the chromaffin granule lumen. It is found in the secreted. Functionally, neuropeptide that competes with and mimic the effects of opiate drugs. They play a role in a number of physiologic functions, including pain perception and responses to stress. The chain is Proenkephalin-A (PENK) from Felis catus (Cat).